Reading from the N-terminus, the 465-residue chain is Iron-sulfur cluster assembly SufBD family protein SAUSA300_0822 (465 aa).

The protein belongs to the iron-sulfur cluster assembly SufBD family.

This chain is Iron-sulfur cluster assembly SufBD family protein SAUSA300_0822, found in Staphylococcus aureus (strain USA300).